The chain runs to 480 residues: Sestrin-2 (480 aa).

Position 1 is an N-acetylmethionine (Met-1). The interval 20–43 is disordered; it reads RGGVAGPETREEHREGQARRGSRG. Residues 27-37 are compositionally biased toward basic and acidic residues; sequence ETREEHREGQA. Residues 66-239 are N-terminal domain; mediates the alkylhydroperoxide reductase activity; it reads GLEALMSSGR…APSPPSEQGT (174 aa). Catalysis depends on Cys-125, which acts as the Cysteine sulfenic acid (-SOH) intermediate. Lys-175 is covalently cross-linked (Glycyl lysine isopeptide (Lys-Gly) (interchain with G-Cter in ubiquitin)). 2 disordered regions span residues 221-251 and 272-291; these read DAEGSPASQAPSPPSEQGTPPSGDPLNNSGG and LLRDEGASQEEMENRFELEK. The span at 223-238 shows a compositional bias: low complexity; sequence EGSPASQAPSPPSEQG. At Ser-249 the chain carries Phosphoserine. The C-terminal domain; mediates TORC1 regulation stretch occupies residues 308–480; the sequence is PHPDILCFVE…ALRAITRYMT (173 aa). Residues 374–377, Thr-386, and Glu-451 contribute to the L-leucine site; that span reads TYNT.

The protein belongs to the sestrin family. Interacts with the GATOR2 complex which is composed of MIOS, SEC13, SEH1L, WDR24 and WDR59; the interaction is negatively regulated by leucine. Conveys leucine availability via direct interaction with SEH1L and WDR24 components of the GATOR2 complex. Interacts with RRAGA, RRAGB, RRAGC and RRAGD; may function as a guanine nucleotide dissociation inhibitor for RRAGs and regulate them. May interact with the TORC2 complex. Interacts with KEAP1, RBX1, SQSTM and ULK1; to regulate the degradation of KEAP1. May also associate with the complex composed of TSC1, TSC2 and the AMP-responsive protein kinase/AMPK to regulate TORC1 signaling. May interact with PRDX1. Phosphorylated by ULK1 at multiple sites. In terms of processing, ubiquitinated at Lys-175 by RNF167 via 'Lys-63'-linked polyubiquitination in response to leucine deprivation: ubiquitination promotes SESN2-interaction with the GATOR2 complex, leading to inhibit the TORC1 signaling pathway. Deubiquitinated at Lys-175 by STAMBPL1, promoting the TORC1 signaling pathway. Ubiquitinated by RNF186; ubiquitination mediates proteasomal degradation. Detected in heart, liver and skeletal muscles (at protein level).

The protein localises to the cytoplasm. It catalyses the reaction a hydroperoxide + L-cysteinyl-[protein] = S-hydroxy-L-cysteinyl-[protein] + an alcohol. Its function is as follows. Functions as an intracellular leucine sensor that negatively regulates the mTORC1 signaling pathway through the GATOR complex. In absence of leucine, binds the GATOR subcomplex GATOR2 and prevents mTORC1 signaling. Binding of leucine to SESN2 disrupts its interaction with GATOR2 thereby activating the TORC1 signaling pathway. This stress-inducible metabolic regulator also plays a role in protection against oxidative and genotoxic stresses. May negatively regulate protein translation in response to endoplasmic reticulum stress, via mTORC1. May positively regulate the transcription by NFE2L2 of genes involved in the response to oxidative stress by facilitating the SQSTM1-mediated autophagic degradation of KEAP1. May also mediate TP53 inhibition of TORC1 signaling upon genotoxic stress. Moreover, may prevent the accumulation of reactive oxygen species (ROS) through the alkylhydroperoxide reductase activity born by the N-terminal domain of the protein. Was originally reported to contribute to oxidative stress resistance by reducing PRDX1. However, this could not be confirmed. This chain is Sestrin-2, found in Mus musculus (Mouse).